We begin with the raw amino-acid sequence, 502 residues long: Lysine--tRNA ligase (502 aa).

Residues Glu-413 and Glu-420 each contribute to the Mg(2+) site.

The protein belongs to the class-II aminoacyl-tRNA synthetase family. As to quaternary structure, homodimer. It depends on Mg(2+) as a cofactor.

It is found in the cytoplasm. It catalyses the reaction tRNA(Lys) + L-lysine + ATP = L-lysyl-tRNA(Lys) + AMP + diphosphate. This chain is Lysine--tRNA ligase, found in Haemophilus influenzae (strain 86-028NP).